The chain runs to 501 residues: ATP synthase subunit alpha (501 aa).

Residue 169 to 176 (GDRQTGKT) coordinates ATP.

This sequence belongs to the ATPase alpha/beta chains family. In terms of assembly, F-type ATPases have 2 components, CF(1) - the catalytic core - and CF(0) - the membrane proton channel. CF(1) has five subunits: alpha(3), beta(3), gamma(1), delta(1), epsilon(1). CF(0) has three main subunits: a(1), b(2) and c(9-12). The alpha and beta chains form an alternating ring which encloses part of the gamma chain. CF(1) is attached to CF(0) by a central stalk formed by the gamma and epsilon chains, while a peripheral stalk is formed by the delta and b chains.

It localises to the cell membrane. The catalysed reaction is ATP + H2O + 4 H(+)(in) = ADP + phosphate + 5 H(+)(out). Its function is as follows. Produces ATP from ADP in the presence of a proton gradient across the membrane. The alpha chain is a regulatory subunit. This Streptococcus agalactiae serotype Ia (strain ATCC 27591 / A909 / CDC SS700) protein is ATP synthase subunit alpha.